The sequence spans 103 residues: Small ribosomal subunit protein uS10 (103 aa).

It belongs to the universal ribosomal protein uS10 family. As to quaternary structure, part of the 30S ribosomal subunit.

Its function is as follows. Involved in the binding of tRNA to the ribosomes. This chain is Small ribosomal subunit protein uS10, found in Shewanella loihica (strain ATCC BAA-1088 / PV-4).